A 1491-amino-acid polypeptide reads, in one-letter code: MAYRKPSDLDGFIQQMPKADMRVKVQLAEDLVTFLSDDTNSIVCTDMGFLIDGLMPWLTGSHFKIAQKSLEAFSELIKRLGSDFNAYTATVLPHVIDRLGDSRDTVREKAQLLLRDLMEHRVLPPQALIDKLATSCFKHKNAKVREEFLQTIVNALHEYGTQQLSVRVYIPPVCALLGDPTVNVREAAIQTLVEIYKHVGDRLRPDLRRMDDVPASKLAMLEQKFDQVKQEGLLLPSALKNTNGNGVGLDEADNIGLRERPTRMIKRPLHSAVSSSLRPKPNVNDVTGDAGAVTMESFESSFEVVPQLNIFHAKDMDDIYKQVLVIISDKNADWEKRVDALKKIRALLILSYHTQPQFVAVQLKELSLSFVDILKEELRSQVIREACITIAYMSKTLRNKLDAFCWSILEHLINLIQNSAKVIASASTIALKYIIKYTHAPKLLKIYTDTLNQSKSKDIRSTLCELMVLLFEEWQTKALERNATVLRDTLKKSIGDADCDARRHSRYAYWAFRRHFPELADQIYGTLDIAAQRALEREREGGGGGGTGTGTGTAPETRRTVSRIGRTPGTLQKPTPSMRSISAVDTAAAQRAKVRAQYTLYSRQRKPLGPNNSNQASMTGAAASGSLPRPRLNSNSGGTPATTPGSVTPRPRGRAGVSQSQPGSRSTSPSTKLRDQYGGIGNYYRGATGAIPKKASGIPRSTASSRETSPTRSGGGLMKRSMYSTGAGSRRTPERNNPVRPSAAARLLAQSREAEHTLGVGDDGQPDYVSGDYMRSGGMRMGRKLMGRDESDDIDSEASSVCSERSFDSSYTRGNKSNYSLSGSHTRLDWSTQRAPFDDIETIIQFCASTHWSERKDGLISLTQYLADGKELTQQQLKCVLDMFRKMFMDTHTKVYSLFLDTVTELILVHANELHEWLFILLTRLFNKLGTDLLNSMHSKIWKTLQVVHEYFPTQLQLKELFRIISDSTQTPTTKTRIAILRFLTDLANTYCKSSDFPSDQSQACERTVLKLAQLAADQKSMELRSQARSCLVALYNLNTPQMTLLLADLPKVYQDSARSCIHSHMRRQSQSCNSGANSPSSSPLSSSSPKPLQSPSVGPFASLQSHHHQLSISSTSPRSRQSSVEQELLFSSELDIQHNIQKTSEEIRHCFGGQYQTALAPNGFNGHLQYHDQGQQDSCASLSSNSKTQSSANTTQSNTPESATMRLDNLERERTTQNAKSPTDDAKVITVSINMAENGELILASNLMESEVVRVALTLTKDQPVELLQTSLTNLGICIKGGNCELPNKHFRSIMRMLLNILEAEHTDVVIAGLHVLSKIMRSNKMRHNWMHFLELILLKIIQCYQHSKEALRDIDSMIPRIAPSLPLDLSINIVNPVIATGEFPTNLCAIKILLEVTEHHGSEITDAHLDIVFPNLARSADDTQSMVRKAAVFCIVKLYFVLGEEKVKPKLSVLNPSKVRLLNVYIEKQRNCISGGGSSTKNSSAASSS.

4 HEAT repeats span residues 44 to 82 (CTDM…RLGS), 85 to 123 (NAYT…HRVL), 163 to 201 (QLSV…HVGD), and 402 to 440 (DAFC…YTHA). Disordered stretches follow at residues 537-586 (RERE…AVDT) and 600-739 (LYSR…NNPV). Residues 542–551 (GGGGGTGTGT) are compositionally biased toward gly residues. The segment covering 569–580 (GTLQKPTPSMRS) has biased composition (polar residues). Phosphoserine occurs at positions 582, 626, and 634. Positions 632 to 646 (LNSNSGGTPATTPGS) are enriched in polar residues. Phosphothreonine is present on Thr648. 2 stretches are compositionally biased toward polar residues: residues 657 to 671 (VSQS…SPST) and 699 to 712 (PRST…SPTR). 5 positions are modified to phosphoserine: Ser806, Ser817, Ser820, Ser822, and Ser824. 2 HEAT repeats span residues 874–912 (QQQL…VHAN) and 955–993 (QLQL…TYCK). Disordered regions lie at residues 1065-1127 (HMRR…SVEQ) and 1167-1205 (GHLQ…ESAT). Low complexity-rich tracts occupy residues 1070 to 1097 (SQSC…QSPS), 1111 to 1124 (LSIS…RQSS), and 1181 to 1200 (ASLS…QSNT). Phosphoserine is present on residues Ser1120, Ser1123, and Ser1124. 2 HEAT repeats span residues 1289-1327 (NKHF…SNKM) and 1408-1446 (DAHL…VLGE).

It belongs to the CLASP family. Interacts with CLIP-190 and microtubules. In terms of tissue distribution, expressed in testis and ovary.

Its subcellular location is the cytoplasm. The protein resides in the cytoskeleton. The protein localises to the nucleus. It is found in the microtubule organizing center. It localises to the centrosome. Its subcellular location is the spindle. The protein resides in the cell projection. The protein localises to the growth cone. It is found in the cleavage furrow. In terms of biological role, microtubule plus-end tracking protein that promotes the stabilization of dynamic microtubules. Required for several aspects of mitotic spindle formation including the formation of the overlapping central spindle microtubules and kinetochore attachment. Required for the incorporation of tubulin subunits at the plus ends of kinetochore microtubules during poleward microtubule flux. Acts antagonistically to Klp10A and Klp67A to maintain metaphase spindle length. Also required for guidance of CNS axons downstream of Abl. May function to identify a subset of microtubules that probe the peripheral growth cone domain, where guidance signals exert their influence on cytoskeletal organization. Also required during oogenesis for the organization of the polarized microtubule network inside the 16-cell cyst that ensures oocyte differentiation. The polypeptide is CLIP-associating protein (chb) (Drosophila melanogaster (Fruit fly)).